The primary structure comprises 36 residues: Glucagon-2 (36 aa).

It belongs to the glucagon family.

It is found in the secreted. Glucagon plays a key role in glucose metabolism and homeostasis. Regulates blood glucose by increasing gluconeogenesis and decreasing glycolysis. This chain is Glucagon-2, found in Huso dauricus (Kaluga sturgeon).